Reading from the N-terminus, the 64-residue chain is Large ribosomal subunit protein bL35 (64 aa).

The segment covering 1–10 has biased composition (polar residues); that stretch reads MPKMKTNSAA. Residues 1 to 64 form a disordered region; sequence MPKMKTNSAA…SKNMKKLLGR (64 aa).

This sequence belongs to the bacterial ribosomal protein bL35 family.

This Bifidobacterium adolescentis (strain ATCC 15703 / DSM 20083 / NCTC 11814 / E194a) protein is Large ribosomal subunit protein bL35.